The chain runs to 109 residues: Anti-sigma-B factor antagonist (109 aa).

One can recognise an STAS domain in the interval 3-109; it reads INVDVKQNEN…ISAKSEGGVQ (107 aa). 2 positions are modified to phosphoserine: Ser-52 and Ser-56. Thr-57 carries the phosphothreonine modification.

It belongs to the anti-sigma-factor antagonist family. As to quaternary structure, monomer. In stressed cells, forms a complex with RsbW. The predominant form of this complex has a stoichiometry of 2:2 (one dimer of RsbW is bound by two monomers of RsbV). Binds to RsbW in the presence of low levels of ATP or under conditions of energy or environmental stress (through dephosphorylation by RsbP or RsbU). In terms of processing, phosphorylated by RsbW on a serine residue. Dephosphorylated by RsbP or RsbU.

Positive regulator of sigma-B activity. Non-phosphorylated RsbV binds to RsbW, preventing its association with sigma-B. When phosphorylated, releases RsbW, which is then free to complex with and inactivate sigma-B. The polypeptide is Anti-sigma-B factor antagonist (rsbV) (Bacillus subtilis (strain 168)).